Consider the following 268-residue polypeptide: Nickel import ATP-binding protein NikE (268 aa).

The ABC transporter domain occupies 4–252 (LNVSGLSHHY…SSDAGRVLQN (249 aa)). ATP is bound at residue 45–52 (GRSGCGKS).

It belongs to the ABC transporter superfamily. Nickel importer (TC 3.A.1.5.3) family. The complex is composed of two ATP-binding proteins (NikD and NikE), two transmembrane proteins (NikB and NikC) and a solute-binding protein (NikA).

The protein localises to the cell inner membrane. The enzyme catalyses Ni(2+)(out) + ATP + H2O = Ni(2+)(in) + ADP + phosphate + H(+). In terms of biological role, part of the ABC transporter complex NikABCDE involved in nickel import. Responsible for energy coupling to the transport system. This is Nickel import ATP-binding protein NikE from Shigella boydii serotype 4 (strain Sb227).